Consider the following 256-residue polypeptide: Transmembrane protein 187 (256 aa).

Transmembrane regions (helical) follow at residues 8-28, 51-71, 94-112, 119-139, 146-168, 193-213, and 233-253; these read ALFH…TGIF, FLAM…GVYW, VFAG…RIGM, VLDQ…CLCL, WLFL…HPHG, NISS…FVVL, and FWSK…LTSL.

It localises to the membrane. The sequence is that of Transmembrane protein 187 (TMEM187) from Bos taurus (Bovine).